The chain runs to 824 residues: Probable receptor-like protein kinase At5g24010 (824 aa).

The N-terminal stretch at 1–24 is a signal peptide; sequence MAFPINLTQTLLFFFCPLLHLSFA. N-linked (GlcNAc...) asparagine glycans are attached at residues asparagine 6, asparagine 41, asparagine 204, asparagine 227, and asparagine 291. Residues 25-406 are Extracellular-facing; it reads AFTPTDNYLI…SSEVVSGKRN (382 aa). The helical transmembrane segment at 407–427 threads the bilayer; it reads VVWIVVGSVLGGFVFLSLFFL. Topologically, residues 428–824 are cytoplasmic; the sequence is SVLCLCRRKN…FSQLMTNAGR (397 aa). The segment at 440–467 is disordered; it reads TRSSESTGWTPLRRFRGSSNSRTTERTV. Residues 456-467 show a composition bias toward polar residues; it reads GSSNSRTTERTV. Positions 489–764 constitute a Protein kinase domain; it reads FDRSLVIGVG…VLWNLEHVLQ (276 aa). ATP is bound by residues 495–503 and lysine 517; that span reads IGVGGFGMV. The Proton acceptor role is filled by aspartate 613. The tract at residues 777-803 is disordered; the sequence is DYGDVTDPRTARQGLSNGSNIERDYGD.

It belongs to the protein kinase superfamily. Ser/Thr protein kinase family.

The protein resides in the membrane. This Arabidopsis thaliana (Mouse-ear cress) protein is Probable receptor-like protein kinase At5g24010.